Reading from the N-terminus, the 250-residue chain is Probable ABC transporter permease protein BAB2_1148 (250 aa).

6 helical membrane-spanning segments follow: residues 12–32, 63–83, 94–114, 122–142, 172–192, and 211–231; these read LLSF…GAVV, VLSG…LMGW, WVQF…IVTL, IFVI…QGVI, VPFI…TVVA, and LYYD…LGLF. The ABC transmembrane type-1 domain maps to 56–236; sequence IFASLRRVLS…ILGLFMDRLL (181 aa).

Belongs to the binding-protein-dependent transport system permease family. In terms of assembly, the complex is composed of two ATP-binding proteins (BAB2_1147), two transmembrane proteins (BAB2_1148) and a solute-binding protein (BAB2_1146).

The protein resides in the cell inner membrane. Functionally, probably part of an ABC transporter complex. Probably responsible for the translocation of the substrate across the membrane. This chain is Probable ABC transporter permease protein BAB2_1148, found in Brucella abortus (strain 2308).